The chain runs to 146 residues: Bacterial hemoglobin (146 aa).

Residues 1-138 enclose the Globin domain; the sequence is MLDQQTINII…IADVFIQVEA (138 aa). Heme b contacts are provided by Gln53 and His85.

Belongs to the globin family. In terms of assembly, homodimer.

Functionally, this protein functions as a terminal oxidase. This is Bacterial hemoglobin (vhb) from Vitreoscilla stercoraria.